Consider the following 366-residue polypeptide: Tetraacyldisaccharide 4'-kinase (366 aa).

51-58 (TVGGTGKT) is a binding site for ATP.

This sequence belongs to the LpxK family.

The catalysed reaction is a lipid A disaccharide + ATP = a lipid IVA + ADP + H(+). Its pathway is glycolipid biosynthesis; lipid IV(A) biosynthesis; lipid IV(A) from (3R)-3-hydroxytetradecanoyl-[acyl-carrier-protein] and UDP-N-acetyl-alpha-D-glucosamine: step 6/6. Its function is as follows. Transfers the gamma-phosphate of ATP to the 4'-position of a tetraacyldisaccharide 1-phosphate intermediate (termed DS-1-P) to form tetraacyldisaccharide 1,4'-bis-phosphate (lipid IVA). The sequence is that of Tetraacyldisaccharide 4'-kinase from Phocaeicola vulgatus (strain ATCC 8482 / DSM 1447 / JCM 5826 / CCUG 4940 / NBRC 14291 / NCTC 11154) (Bacteroides vulgatus).